The following is a 248-amino-acid chain: 14-3-3-like protein 1 (248 aa).

This sequence belongs to the 14-3-3 family. Interacts with daf-16 and sir-2.1. Interacts with atgl-1. Interacts with hcf-1.

It is found in the cytoplasm. The protein localises to the nucleus. Functionally, required to modulate lifespan, in concert with hcf-1, acting redundantly with 14-3-3-like protein ftt-2. This is 14-3-3-like protein 1 (par-5) from Caenorhabditis elegans.